A 217-amino-acid chain; its full sequence is MSIGILGKKLGMSQLFDKDGNAVPVTLIEAGPCRVTQLKTQPLDGYTAIQIGYGVSKDKHLSKPEKGHLLKSGEILLKHLKEYRVEENSSYEIGKEITVTNFEVGQKVDISGKSMGRGFSGYQKRHGFSRGPMSHGSKNHRAPGSTGAGTTPGRIYPGKRMAGRYGGKKITTKGLLVVKIDDQKNLLVVKGSVPGKPGSIVNIKPNNVVGNKGGAKS.

The disordered stretch occupies residues 129–161 (SRGPMSHGSKNHRAPGSTGAGTTPGRIYPGKRM). Over residues 142–153 (APGSTGAGTTPG) the composition is skewed to low complexity.

Belongs to the universal ribosomal protein uL3 family. Part of the 50S ribosomal subunit. Forms a cluster with proteins L14 and L19.

Its function is as follows. One of the primary rRNA binding proteins, it binds directly near the 3'-end of the 23S rRNA, where it nucleates assembly of the 50S subunit. The protein is Large ribosomal subunit protein uL3 of Prochlorococcus marinus subsp. pastoris (strain CCMP1986 / NIES-2087 / MED4).